Reading from the N-terminus, the 270-residue chain is Phosphatidylglycerol--prolipoprotein diacylglyceryl transferase (270 aa).

A run of 4 helical transmembrane segments spans residues 19–39 (FPVY…LWLA), 56–76 (LVLI…VIFE), 92–112 (QGGL…ILFA), and 116–136 (GVSF…GQAI). Position 138 (R138) interacts with a 1,2-diacyl-sn-glycero-3-phospho-(1'-sn-glycerol). 3 consecutive transmembrane segments (helical) span residues 178–198 (HPTF…LLAL), 206–226 (GELF…VEGL), and 236–256 (LRIA…FIIV).

It belongs to the Lgt family.

The protein localises to the cell membrane. It carries out the reaction L-cysteinyl-[prolipoprotein] + a 1,2-diacyl-sn-glycero-3-phospho-(1'-sn-glycerol) = an S-1,2-diacyl-sn-glyceryl-L-cysteinyl-[prolipoprotein] + sn-glycerol 1-phosphate + H(+). It functions in the pathway protein modification; lipoprotein biosynthesis (diacylglyceryl transfer). Functionally, catalyzes the transfer of the diacylglyceryl group from phosphatidylglycerol to the sulfhydryl group of the N-terminal cysteine of a prolipoprotein, the first step in the formation of mature lipoproteins. This Bacillus anthracis (strain A0248) protein is Phosphatidylglycerol--prolipoprotein diacylglyceryl transferase.